The sequence spans 137 residues: NADH-quinone oxidoreductase subunit A (137 aa).

3 helical membrane passes run 12 to 32 (WGFA…LGLS), 66 to 86 (FYLV…LFAW), and 95 to 115 (WTGF…LVYL).

This sequence belongs to the complex I subunit 3 family. NDH-1 is composed of 13 different subunits. Subunits NuoA, H, J, K, L, M, N constitute the membrane sector of the complex.

It localises to the cell inner membrane. It catalyses the reaction a quinone + NADH + 5 H(+)(in) = a quinol + NAD(+) + 4 H(+)(out). Its function is as follows. NDH-1 shuttles electrons from NADH, via FMN and iron-sulfur (Fe-S) centers, to quinones in the respiratory chain. The immediate electron acceptor for the enzyme in this species is believed to be ubiquinone. Couples the redox reaction to proton translocation (for every two electrons transferred, four hydrogen ions are translocated across the cytoplasmic membrane), and thus conserves the redox energy in a proton gradient. In Pseudomonas putida (strain ATCC 700007 / DSM 6899 / JCM 31910 / BCRC 17059 / LMG 24140 / F1), this protein is NADH-quinone oxidoreductase subunit A.